The sequence spans 348 residues: NADH-quinone oxidoreductase subunit H (348 aa).

8 helical membrane passes run 7–27 (IWLL…VVLL), 82–102 (GVFL…WAVI), 115–135 (VGLL…IMGG), 161–181 (IGFV…TTIV), 199–219 (FLDW…ISAL), 251–271 (LFFL…TILF), 287–307 (VPGI…FAMV), and 322–342 (LGWK…ATFL).

The protein belongs to the complex I subunit 1 family. In terms of assembly, NDH-1 is composed of 14 different subunits. Subunits NuoA, H, J, K, L, M, N constitute the membrane sector of the complex.

The protein resides in the cell inner membrane. The enzyme catalyses a quinone + NADH + 5 H(+)(in) = a quinol + NAD(+) + 4 H(+)(out). Functionally, NDH-1 shuttles electrons from NADH, via FMN and iron-sulfur (Fe-S) centers, to quinones in the respiratory chain. The immediate electron acceptor for the enzyme in this species is believed to be ubiquinone. Couples the redox reaction to proton translocation (for every two electrons transferred, four hydrogen ions are translocated across the cytoplasmic membrane), and thus conserves the redox energy in a proton gradient. This subunit may bind ubiquinone. The chain is NADH-quinone oxidoreductase subunit H from Bartonella quintana (strain Toulouse) (Rochalimaea quintana).